The sequence spans 202 residues: Heart- and neural crest derivatives-expressed protein 1 (202 aa).

Residues 83 to 135 enclose the bHLH domain; that stretch reads RKGVGGPKKERRRTESINSAFAELRECIPNVPADTKLSKIKTLRLATSYIAYL. The disordered stretch occupies residues 143 to 187; it reads SQPGEPEGFKAELKKADGRENKRKRETQPEVYSQPLAHGEKKLKG. The segment covering 149–162 has biased composition (basic and acidic residues); it reads EGFKAELKKADGRE.

In terms of assembly, efficient DNA binding requires dimerization with another bHLH protein.

The protein localises to the nucleus. It localises to the nucleoplasm. The protein resides in the nucleolus. In terms of biological role, transcription factor. Plays an essential role in cardiac morphogenesis. The polypeptide is Heart- and neural crest derivatives-expressed protein 1 (HAND1) (Gallus gallus (Chicken)).